A 242-amino-acid polypeptide reads, in one-letter code: Octanoyltransferase (242 aa).

In terms of domain architecture, BPL/LPL catalytic spans 31–206; it reads SQTTDEIWFL…LFLKNFGYNQ (176 aa). Substrate-binding positions include 70-77, 137-139, and 150-152; these read RGGQVTYH, SIG, and GLA. The active-site Acyl-thioester intermediate is the cysteine 168.

This sequence belongs to the LipB family.

Its subcellular location is the cytoplasm. The catalysed reaction is octanoyl-[ACP] + L-lysyl-[protein] = N(6)-octanoyl-L-lysyl-[protein] + holo-[ACP] + H(+). It functions in the pathway protein modification; protein lipoylation via endogenous pathway; protein N(6)-(lipoyl)lysine from octanoyl-[acyl-carrier-protein]: step 1/2. Functionally, catalyzes the transfer of endogenously produced octanoic acid from octanoyl-acyl-carrier-protein onto the lipoyl domains of lipoate-dependent enzymes. Lipoyl-ACP can also act as a substrate although octanoyl-ACP is likely to be the physiological substrate. In Coxiella burnetii (strain CbuK_Q154) (Coxiella burnetii (strain Q154)), this protein is Octanoyltransferase.